We begin with the raw amino-acid sequence, 558 residues long: Dihydroxy-acid dehydratase (558 aa).

[2Fe-2S] cluster is bound at residue Cys-54. Asp-86 is a Mg(2+) binding site. Cys-127 is a binding site for [2Fe-2S] cluster. Mg(2+) is bound by residues Asp-128 and Lys-129. An N6-carboxylysine modification is found at Lys-129. Position 199 (Cys-199) interacts with [2Fe-2S] cluster. Mg(2+) is bound at residue Glu-448. Ser-474 functions as the Proton acceptor in the catalytic mechanism.

The protein belongs to the IlvD/Edd family. As to quaternary structure, homodimer. The cofactor is [2Fe-2S] cluster. It depends on Mg(2+) as a cofactor.

The enzyme catalyses (2R)-2,3-dihydroxy-3-methylbutanoate = 3-methyl-2-oxobutanoate + H2O. It carries out the reaction (2R,3R)-2,3-dihydroxy-3-methylpentanoate = (S)-3-methyl-2-oxopentanoate + H2O. Its pathway is amino-acid biosynthesis; L-isoleucine biosynthesis; L-isoleucine from 2-oxobutanoate: step 3/4. The protein operates within amino-acid biosynthesis; L-valine biosynthesis; L-valine from pyruvate: step 3/4. Its function is as follows. Functions in the biosynthesis of branched-chain amino acids. Catalyzes the dehydration of (2R,3R)-2,3-dihydroxy-3-methylpentanoate (2,3-dihydroxy-3-methylvalerate) into 2-oxo-3-methylpentanoate (2-oxo-3-methylvalerate) and of (2R)-2,3-dihydroxy-3-methylbutanoate (2,3-dihydroxyisovalerate) into 2-oxo-3-methylbutanoate (2-oxoisovalerate), the penultimate precursor to L-isoleucine and L-valine, respectively. The polypeptide is Dihydroxy-acid dehydratase (Acidothermus cellulolyticus (strain ATCC 43068 / DSM 8971 / 11B)).